The sequence spans 277 residues: Probable diphthine methyl ester synthase (277 aa).

S-adenosyl-L-methionine-binding positions include leucine 9, aspartate 89, glycine 92, 117–118 (SV), leucine 168, leucine 227, and histidine 252.

Belongs to the diphthine synthase family.

The enzyme catalyses 2-[(3S)-amino-3-carboxypropyl]-L-histidyl-[translation elongation factor 2] + 4 S-adenosyl-L-methionine = diphthine methyl ester-[translation elongation factor 2] + 4 S-adenosyl-L-homocysteine + 3 H(+). Its pathway is protein modification; peptidyl-diphthamide biosynthesis. S-adenosyl-L-methionine-dependent methyltransferase that catalyzes four methylations of the modified target histidine residue in translation elongation factor 2 (EF-2), to form an intermediate called diphthine methyl ester. The four successive methylation reactions represent the second step of diphthamide biosynthesis. The sequence is that of Probable diphthine methyl ester synthase from Arabidopsis thaliana (Mouse-ear cress).